An 89-amino-acid chain; its full sequence is Small ribosomal subunit protein bS20 (89 aa).

Belongs to the bacterial ribosomal protein bS20 family.

Its function is as follows. Binds directly to 16S ribosomal RNA. The polypeptide is Small ribosomal subunit protein bS20 (Helicobacter pylori (strain ATCC 700392 / 26695) (Campylobacter pylori)).